A 383-amino-acid chain; its full sequence is Micronemal protein 3 (383 aa).

Positions M1 to A26 are cleaved as a signal peptide. A propeptide spans L27 to Q66 (required for proper sorting to micronemes). The segment at S67–C145 is lectin-like; required for the binding of host cells. Required for proper sorting to micronemes stretches follow at residues S146 to P189, C190 to G236, and C237 to K290. The region spanning S186–E227 is the EGF-like domain. 2 disulfide bridges follow: C190–C204 and C198–C214. N201 is a glycosylation site (N-linked (GlcNAc...) asparagine). An involved in dimerization region spans residues E294–H359.

As to quaternary structure, homodimer; dimerization is likely required for host cell binding but not for trafficking to micronemes. Post-translationally, removal of the propeptide occurs in a post-medial-Golgi compartment. Removal of the propeptide is required for the host cell binding. The presence of propeptide does not affect dimerization. The presence of propeptide does not affect sorting to micronemes.

The protein localises to the cytoplasmic vesicle. The protein resides in the secretory vesicle. It is found in the microneme. Its subcellular location is the secreted. It localises to the golgi apparatus. The protein localises to the endoplasmic reticulum. Its function is as follows. Adhesin; can bind both the host cells and the parasites. May be involved in parasite invasion by acting as a bridge between the parasite and the host cell. Triggers innate immune responses in mouse macrophages via the TLR11/MyD88/NF-kappa-B pathway. Induces TNF/TNF-alpha secretion in mouse macrophages. Induces secretion of IL6 in mouse and human macrophages likely via different mechanisms. Up-regulates expression of NOS2/iNOS in mouse macrophages. Induces mouse macrophage polarization. The protein is Micronemal protein 3 of Toxoplasma gondii.